A 39-amino-acid chain; its full sequence is B melanoma antigen 4 (39 aa).

Positions 1-17 are cleaved as a signal peptide; sequence MAAGAVFLALSAQLLQA.

It belongs to the BAGE family. In terms of tissue distribution, not expressed in normal tissues except in testis. Expressed in melanoma, bladder and lung carcinomas.

It is found in the secreted. Functionally, unknown. Candidate gene encoding tumor antigens. The sequence is that of B melanoma antigen 4 (BAGE4) from Homo sapiens (Human).